Here is a 489-residue protein sequence, read N- to C-terminus: UBX domain-containing protein 7 (489 aa).

A2 carries the post-translational modification N-acetylalanine. One can recognise a UBA domain in the interval 2 to 54 (AAHGGSAASSALKGLIQQFTTITGASESVGKHMLEACNNNLEMAVTMFLDGGG). The interval 56 to 77 (AEEPSTSSASVSTVRPHTEEEV) is disordered. Residues 59 to 70 (PSTSSASVSTVR) show a composition bias toward polar residues. Residue K84 forms a Glycyl lysine isopeptide (Lys-Gly) (interchain with G-Cter in SUMO2) linkage. A Glycyl lysine isopeptide (Lys-Gly) (interchain with G-Cter in ubiquitin) cross-link involves residue K99. K134 participates in a covalent cross-link: Glycyl lysine isopeptide (Lys-Gly) (interchain with G-Cter in SUMO2). Phosphoserine is present on residues S278, S280, S285, and S288. One can recognise a UIM domain in the interval 285–304 (SEDSQLEAAIRASLQETHFD). Residues 300-309 (ETHFDSTQTK) are compositionally biased toward polar residues. Positions 300–384 (ETHFDSTQTK…PGTATNHQGL (85 aa)) are disordered. Phosphothreonine is present on T306. The segment covering 352–366 (HKDLGHRKEENRRPL) has biased composition (basic and acidic residues). The UBX domain maps to 408–485 (VNGPKAQLML…GLCPQETVFV (78 aa)).

Interacts with neddylated CUL2, ubiquitinated HIF1A, and VCP/p97.

The protein localises to the nucleus. Its function is as follows. Ubiquitin-binding adapter that links a subset of NEDD8-associated cullin ring ligases (CRLs) to the segregase VCP/p97, to regulate turnover of their ubiquitination substrates. The protein is UBX domain-containing protein 7 (UBXN7) of Homo sapiens (Human).